The primary structure comprises 893 residues: MSISGSGCGSPNSADASNDFKELWTKLKEYHDKEVQGLQVKVTKLKKERILDAQRLEEFFTKNQQLRDQQKVLQETIKILEDRLRAGLCDRCAVTEEHMHKKQQEFENIRQQNLKLITELMNEKNTLQEENKKLSEQLQQKMENGQQDQVAELACEENIIPDSPVTSFSFSGINRLRKKENLHVRYVEQTHTKLERSLCTNELRKISKDSAPAPVNSEEHEILVADTCDQNHSPLSKICETSSYPTDKTSFNLDTVVAETLGLNGQEESEPQGPMSPLGSELYHCLKEDHKKHPFMESARSKEDSLRFSDSASKTPPQEFTTRASSPVFGATSTVKAHLGLNTSFSPSLLDIGKKNLLKTAPFSNIAVSRSEKVRSKSEDNALFTQHSLGSEVKVISQSFSSKQILTNKTVSDSVDEQCSADHMNTTVADKYLVPLKSLGGKASKRKRTEEESEHAVKCPQACFDKENALPFPMENQFSMNGDHVMDKPLDLSDRFAATQRQEKNHGNETSKNKLKQATIYEALKPIPKGSSSGRKALSGDCMPAKDSWETYCLQPRSLQSSSKFSPDQKTPLQIKEENPVFKTPPCSQESLETENLFGDVKGTGSLVPTKVKSRAVHGGCELASVLQLNPCRVAKTKALPSNQDTSFENIQWSVDPGADLSQYKMDVTVIDTKDSSHSRLGGETVDMDCTLVSETVLLKMKKQEQKERSPNGDIKMNDSLEDMFDRTTHEEYESCLADSFSQVPDEEELPDTTKKTNIPADKQDGVKQKAFVGPYFKDKERETSIQNFPHIEVVRKKEERRKLLGHTCKECEIYYADLPAEEREKKLASCSRHRFRYIPPNTPENFWEVGFPSTQTCLERGYIKEDLDLSPRPKRRQPYNAVFSPKGKEQRT.

An essential for binding to the MRN complex and for RPA focus formation on DNA damage region spans residues 22–45 (ELWTKLKEYHDKEVQGLQVKVTKL). Residues 35-84 (VQGLQVKVTKLKKERILDAQRLEEFFTKNQQLRDQQKVLQETIKILEDRL) adopt a coiled-coil conformation. The interval 45–160 (LKKERILDAQ…AELACEENII (116 aa)) is required for interaction with LMO4, probably by stabilizing the interaction through RPPB8 dimerization. Residues Lys-62 and Lys-115 each participate in a glycyl lysine isopeptide (Lys-Gly) (interchain with G-Cter in SUMO2) cross-link. Positions 117 to 138 (ITELMNEKNTLQEENKKLSEQL) form a coiled coil. Residue Lys-193 forms a Glycyl lysine isopeptide (Lys-Gly) (interchain with G-Cter in SUMO2) linkage. Phosphoserine occurs at positions 233 and 276. Over residues 296-307 (MESARSKEDSLR) the composition is skewed to basic and acidic residues. Residues 296–324 (MESARSKEDSLRFSDSASKTPPQEFTTRA) form a disordered region. Over residues 308–324 (FSDSASKTPPQEFTTRA) the composition is skewed to polar residues. Residue Thr-315 is modified to Phosphothreonine. 3 positions are modified to phosphoserine: Ser-325, Ser-326, and Ser-348. Residues Lys-359 and Lys-377 each participate in a glycyl lysine isopeptide (Lys-Gly) (interchain with G-Cter in SUMO2) cross-link. Ser-378 carries the phosphoserine modification. Residues Lys-394, Lys-403, Lys-409, and Lys-437 each participate in a glycyl lysine isopeptide (Lys-Gly) (interchain with G-Cter in SUMO2) cross-link. A PXDLS motif motif is present at residues 489-493 (PLDLS). The tract at residues 508–556 (NETSKNKLKQATIYEALKPIPKGSSSGRKALSGDCMPAKDSWETYCLQP) is damage-recruitment motif. Lys-525 participates in a covalent cross-link: Glycyl lysine isopeptide (Lys-Gly) (interchain with G-Cter in SUMO2); alternate. Glycyl lysine isopeptide (Lys-Gly) (interchain with G-Cter in SUMO2) cross-links involve residues Lys-529, Lys-570, and Lys-576. Lys-602 is covalently cross-linked (Glycyl lysine isopeptide (Lys-Gly) (interchain with G-Cter in SUMO2); alternate). Residues Lys-611, Lys-636, and Lys-638 each participate in a glycyl lysine isopeptide (Lys-Gly) (interchain with G-Cter in SUMO2) cross-link. The interval 639–683 (ALPSNQDTSFENIQWSVDPGADLSQYKMDVTVIDTKDSSHSRLGG) is required for interaction with LMO4, probably by making physical contact with LMO4. The residue at position 662 (Ser-662) is a Phosphoserine; by ATM. A Glycyl lysine isopeptide (Lys-Gly) (interchain with G-Cter in SUMO2) cross-link involves residue Lys-674. Ser-677 carries the phosphoserine modification. Lys-716 participates in a covalent cross-link: Glycyl lysine isopeptide (Lys-Gly) (interchain with G-Cter in SUMO2). Ser-720 bears the Phosphoserine mark. Ser-742 carries the phosphoserine; by ATM modification. A Glycyl lysine isopeptide (Lys-Gly) (interchain with G-Cter in SUMO2) cross-link involves residue Lys-778. The short motif at 836–838 (FRY) is the KLHL15-binding element. A phosphothreonine mark is found at Thr-843 and Thr-855. Residue Lys-865 forms a Glycyl lysine isopeptide (Lys-Gly) (interchain with G-Cter in SUMO2) linkage. A disordered region spans residues 869-893 (DLSPRPKRRQPYNAVFSPKGKEQRT).

The protein belongs to the COM1/SAE2/CtIP family. In terms of assembly, homotetramer; formed by antiparallel association of helical extensions protruding from the N-termini of two parallel coiled-coil dimers. Forms a dumbbell-shaped particle in which polar globular domains are held about 30 nm apart by a central rod. Homotetramerization is required for DNA-end resection and repair. Interacts (via the PXDLS motif) with CTBP1; the interaction is disrupted via binding of the adenovirus E1A to CTBP1. Component of the BRCA1-RBBP8 complex. Interacts (the Ser-326 phosphorylated form) with BRCA1 (via the C-terminal BRCT domains): the interaction occurs in the G2 phase, ubiquitinates RBBP8 and involves RBBP8 in BRCA1-dependent G2/M checkpoint control on DNA damage. Interacts with RB1. Interacts with the MRN complex. Interacts directly with MRE11; the interaction is required for efficient homologous recombination (HR) and regulation of the MRN complex. Interacts (when phosphorylated by CDK1) with NBN; promoting association with the MRN complex. Interacts with LMO4 (via the LIM zinc-binding 1 domain). Interacts with SIAH1. Interacts with RNF138. Interacts with EXD2. Interacts with CUL3 and KLHL15; this interaction leads to RBBP8 proteasomal degradation. Directly interacts with PIN1; this interaction depends upon RBBP8 phosphorylation, predominantly at Thr-315. Interacts with FZR1; this interaction leads to APC/C-mediated RBBP8 proteasomal degradation. Interacts with AUNIP; leading to recruit RBBP8 to sites of DNA damage. Interacts with SAMHD1. Interacts with HDGFL2. In terms of processing, hyperphosphorylation upon ionizing radiation results in dissociation from BRCA1. Phosphorylation at Thr-843 by CDK1 is essential for the recruitment to DNA and the DNA repair function. Phosphorylation at Thr-843 and Thr-855 promote interaction with NBN and recruitment to double-strand breaks (DSBs). Phosphorylated on Ser-326 as cells enter G2 phase. Phosphorylated at Ser-326 as cells enter G2 phase. This phosphorylation is required for binding BRCA1 and for the G2/M DNA damage transition checkpoint control. Phosphorylation at Thr-315 is required for PIN1-binding, while phosphorylation at Ser-276 serves as a PIN1 isomerization site. Phosphorylation at Thr-315 is cell-cycle dependent. It steadily increases during S phase, peaks at late S/G2 phase, and drops at G1. Phosphorylation is not required for tetramerization. Binds to DNA more strongly when dephosphorylated. Post-translationally, ubiquitinated. Ubiquitination at multiple sites by BRCA1 (via its N-terminal RING domain) does not lead to its proteasomal degradation but instead the ubiquitinated RBBP8 binds to chromatin following DNA damage and may play a role in G2/M checkpoint control. Ubiquitinated by RNF138 at its N-terminus. Ubiquitinated through 'Lys-48' by the E3 CUL3-KLHL15 complex; this modification leads to proteasomal degradation. Ubiquitinated by the E3 FZR1/APC/C complex; this modification leads to proteasomal degradation.

It is found in the nucleus. The protein localises to the chromosome. Its function is as follows. Endonuclease that cooperates with the MRE11-RAD50-NBN (MRN) complex in DNA-end resection, the first step of double-strand break (DSB) repair through the homologous recombination (HR) pathway. HR is restricted to S and G2 phases of the cell cycle and preferentially repairs DSBs resulting from replication fork collapse. Key determinant of DSB repair pathway choice, as it commits cells to HR by preventing classical non-homologous end-joining (NHEJ). Specifically promotes the endonuclease activity of the MRN complex to clear DNA ends containing protein adducts: recruited to DSBs by NBN following phosphorylation by CDK1, and promotes the endonuclease activity of MRE11 to clear protein-DNA adducts and generate clean double-strand break ends. Functions downstream of the MRN complex and ATM, promotes ATR activation and its recruitment to DSBs in the S/G2 phase facilitating the generation of ssDNA. Component of the BRCA1-RBBP8 complex that regulates CHEK1 activation and controls cell cycle G2/M checkpoints on DNA damage. During immunoglobulin heavy chain class-switch recombination, promotes microhomology-mediated alternative end joining (A-NHEJ) and plays an essential role in chromosomal translocations. Binds preferentially to DNA Y-junctions and to DNA substrates with blocked ends and promotes intermolecular DNA bridging. The chain is DNA endonuclease RBBP8 (Rbbp8) from Mus musculus (Mouse).